The chain runs to 341 residues: MKDVALQLKNVGKSYGNKVVLESIDFEVRHGSMVALLGTSGAGKSTLFRCLTGLEPIDSGSIVALGESIHELSPARLRAVRGQIGFVFQQLHLVKRFSALENVLGARLAEMPIWRVTLKSFSRADKVLAFECLDRVGMLDYANTPTQLLSGGQQQRIAIARALAQKPKIIIADEPVSSLDPLTARSVLQTLKAAATDLNVAVLCSLHQVDLAREFGDRIVGMRDGRVVFDGTPAEFTDERVHALYQVPAGKMHQRPRATRSTRWPVWLWHEGRSDDHIHTPHTRAAPGHRTALAPERALQRQTSAGADRRHGAVVRDRTTHRNGPHGGHDGTGRGQDRGPG.

One can recognise an ABC transporter domain in the interval 6 to 249 (LQLKNVGKSY…RVHALYQVPA (244 aa)). 38–45 (GTSGAGKS) contacts ATP. The interval 278 to 341 (IHTPHTRAAP…TGRGQDRGPG (64 aa)) is disordered. Composition is skewed to basic and acidic residues over residues 307-320 (ADRR…DRTT) and 327-341 (GGHD…RGPG).

This sequence belongs to the ABC transporter superfamily. Phosphonates importer (TC 3.A.1.9.1) family. The complex is composed of two ATP-binding proteins (HtxD), two transmembrane proteins (HtxC and HtxE) and a solute-binding protein (HtxB).

Its subcellular location is the cell inner membrane. The enzyme catalyses phosphinate(out) + ATP + H2O = phosphinate(in) + ADP + phosphate + H(+). In terms of biological role, part of the ABC transporter complex HtxBCDE involved in hypophosphite import. Responsible for energy coupling to the transport system. This Stutzerimonas stutzeri (Pseudomonas stutzeri) protein is Hypophosphite import ATP-binding protein HtxD (htxD).